Consider the following 744-residue polypeptide: MTVATPYFQQGSEIALLNGEYTDVFSLLGMHSVNDGKALVVRCLIPGAISVDVLSAKDGRKVATLEQVNEHGLFAGKMGRRVKSFAYLLRVQYPLCEQLINDPYQFDSLLNPDDVYLFGEGSQLQTYHFQGANWREHHGVKGVHFCVWAPNAKQVAVMGDFNLWDNKRHILRHHPASGLWDIFIAEVEPEQHYKYAISDMHGNQVIKSDPYAVAMQPSPHNASKIPHVERYDWQDSQWLADRASHQPHVQPMSIYEVQLASWRRKGDDSQEYTDYSQLIAELVPYIKEMGFTHLQLMPISEYPFDGSWGYQPVGLFAPTYRFGDANGLRAFIDECHQQGIAVLLDWVPAHFPRDPHGLVRFDGSCLYEHDDPRKGEQPDWDTLIYNYGRAEVRSFLYSNAHYWLDEFHFDGLRLDAVSSMLYLDYSRRADQWIPNKFGGRENLEAISFLQELNARMYQCFPGINMIAEESTAWPGVTQATSNNGLGFGFKWNMGWMNDTLRYISCDPLFRRYHHGELTFSLVYAFTEQFILSLSHDEVVHGKGSLLHKIPGDDWQKFATLRAYYGFMWTHPGKKLLFMGNEFAQRNEWNHNQSLDWHLLTYAPHQGVQDWVRDLNQCYQQYPALYQRDHHSDGFQWLDCNNADNNILVFCRFGMDKQQHVVIVVNMSPQVYYDFRVGVPTAQNYRELLNSDHRHYGGGDVVNDNPCEAQVTPWQGMSHSIVITVPPLGCSIWVPELDEQDQPTQ.

The Nucleophile role is filled by D415. The active-site Proton donor is E468.

The protein belongs to the glycosyl hydrolase 13 family. GlgB subfamily. Monomer.

It catalyses the reaction Transfers a segment of a (1-&gt;4)-alpha-D-glucan chain to a primary hydroxy group in a similar glucan chain.. It functions in the pathway glycan biosynthesis; glycogen biosynthesis. Catalyzes the formation of the alpha-1,6-glucosidic linkages in glycogen by scission of a 1,4-alpha-linked oligosaccharide from growing alpha-1,4-glucan chains and the subsequent attachment of the oligosaccharide to the alpha-1,6 position. The protein is 1,4-alpha-glucan branching enzyme GlgB of Shewanella frigidimarina (strain NCIMB 400).